We begin with the raw amino-acid sequence, 265 residues long: Hemin import ATP-binding protein HmuV (265 aa).

One can recognise an ABC transporter domain in the interval 10–247; that stretch reads LVARHLRFQT…ETLAHWYRAD (238 aa). 42 to 49 lines the ATP pocket; it reads GPNGAGKS.

It belongs to the ABC transporter superfamily. Heme (hemin) importer (TC 3.A.1.14.5) family. The complex is composed of two ATP-binding proteins (HmuV), two transmembrane proteins (HmuU) and a solute-binding protein (HmuT).

It is found in the cell inner membrane. Part of the ABC transporter complex HmuTUV involved in hemin import. Responsible for energy coupling to the transport system. This is Hemin import ATP-binding protein HmuV from Pectobacterium atrosepticum (strain SCRI 1043 / ATCC BAA-672) (Erwinia carotovora subsp. atroseptica).